The primary structure comprises 260 residues: UPF0246 protein SCO2297 (260 aa).

Belongs to the UPF0246 family.

The protein is UPF0246 protein SCO2297 of Streptomyces coelicolor (strain ATCC BAA-471 / A3(2) / M145).